We begin with the raw amino-acid sequence, 413 residues long: ATP-dependent RNA helicase RhlB (413 aa).

The short motif at 9 to 37 is the Q motif element; it reads QRFADLPLHPQILAALNDQNFEYCTPIQA. The Helicase ATP-binding domain maps to 40–217; the sequence is LPLTLQGKDV…FEDMNDPEYI (178 aa). 53 to 60 contacts ATP; that stretch reads AQTGTGKT. The DEAD box motif lies at 163–166; the sequence is DEAD. Residues 241–388 form the Helicase C-terminal domain; that stretch reads KMALLMTLLE…VSQYDPDSLI (148 aa).

The protein belongs to the DEAD box helicase family. RhlB subfamily. Component of the RNA degradosome, which is a multiprotein complex involved in RNA processing and mRNA degradation.

It localises to the cytoplasm. It catalyses the reaction ATP + H2O = ADP + phosphate + H(+). Functionally, DEAD-box RNA helicase involved in RNA degradation. Has RNA-dependent ATPase activity and unwinds double-stranded RNA. The polypeptide is ATP-dependent RNA helicase RhlB (Actinobacillus succinogenes (strain ATCC 55618 / DSM 22257 / CCUG 43843 / 130Z)).